An 860-amino-acid chain; its full sequence is Photoactivated adenylate cyclase subunit beta (860 aa).

One can recognise a BLUF 1 domain in the interval 56-149 (LRRLMYLSKS…GRMYGDWHMK (94 aa)). Residues 205-333 (VVTFIYLVEF…DCINTTSRIA (129 aa)) form the Guanylate cyclase 1 domain. Residues 420 to 443 (RPPIFDDTPKGKPRPRTPGYGGRQ) form a disordered region. Residues 471-563 (LTTLTYISQA…RAYPAEWTLT (93 aa)) form the BLUF 2 domain. The Guanylate cyclase 2 domain occupies 619–748 (VMLATDICSF…AVSARVMEVE (130 aa)). The segment at 819–860 (KPLALEPEEAKQDYRVSPGRMRHGDSGRRSNSAQGKRSTQVR) is disordered. Polar residues predominate over residues 847–860 (RSNSAQGKRSTQVR).

Belongs to the adenylyl cyclase class-4/guanylyl cyclase family. As to quaternary structure, heterotetramer of two alpha and two beta subunits. It depends on FAD as a cofactor.

Its subcellular location is the cell projection. It is found in the cilium. The protein localises to the flagellum. It carries out the reaction ATP = 3',5'-cyclic AMP + diphosphate. Functionally, acts as a photoreceptor for the step-up photophobic response. The sequence is that of Photoactivated adenylate cyclase subunit beta from Euglena longa (Euglenophycean alga).